We begin with the raw amino-acid sequence, 517 residues long: ATP synthase subunit alpha 1 (517 aa).

Glycine 174–threonine 181 serves as a coordination point for ATP.

It belongs to the ATPase alpha/beta chains family. In terms of assembly, F-type ATPases have 2 components, CF(1) - the catalytic core - and CF(0) - the membrane proton channel. CF(1) has five subunits: alpha(3), beta(3), gamma(1), delta(1), epsilon(1). CF(0) has three main subunits: a(1), b(2) and c(9-12). The alpha and beta chains form an alternating ring which encloses part of the gamma chain. CF(1) is attached to CF(0) by a central stalk formed by the gamma and epsilon chains, while a peripheral stalk is formed by the delta and b chains.

It localises to the cell inner membrane. It carries out the reaction ATP + H2O + 4 H(+)(in) = ADP + phosphate + 5 H(+)(out). In terms of biological role, produces ATP from ADP in the presence of a proton gradient across the membrane. The alpha chain is a regulatory subunit. In Albidiferax ferrireducens (strain ATCC BAA-621 / DSM 15236 / T118) (Rhodoferax ferrireducens), this protein is ATP synthase subunit alpha 1.